The chain runs to 86 residues: Small ribosomal subunit protein bS20 (86 aa).

Belongs to the bacterial ribosomal protein bS20 family.

In terms of biological role, binds directly to 16S ribosomal RNA. This Rhodococcus erythropolis (strain PR4 / NBRC 100887) protein is Small ribosomal subunit protein bS20.